The chain runs to 277 residues: Digeranylgeranylglyceryl phosphate synthase (277 aa).

8 helical membrane passes run 16–36 (ILAG…IPPV), 40–60 (ILIF…NDYF), 93–113 (FIGL…ALGA), 129–149 (FIGN…GAVG), 153–173 (IDLA…REIM), 199–218 (SGII…FLPV), 222–244 (IGLG…IDVL), and 253–273 (GQKI…LGAL).

It belongs to the UbiA prenyltransferase family. DGGGP synthase subfamily. Requires Mg(2+) as cofactor.

The protein localises to the cell membrane. It catalyses the reaction sn-3-O-(geranylgeranyl)glycerol 1-phosphate + (2E,6E,10E)-geranylgeranyl diphosphate = 2,3-bis-O-(geranylgeranyl)-sn-glycerol 1-phosphate + diphosphate. It functions in the pathway membrane lipid metabolism; glycerophospholipid metabolism. Functionally, prenyltransferase that catalyzes the transfer of the geranylgeranyl moiety of geranylgeranyl diphosphate (GGPP) to the C2 hydroxyl of (S)-3-O-geranylgeranylglyceryl phosphate (GGGP). This reaction is the second ether-bond-formation step in the biosynthesis of archaeal membrane lipids. The chain is Digeranylgeranylglyceryl phosphate synthase from Pyrococcus horikoshii (strain ATCC 700860 / DSM 12428 / JCM 9974 / NBRC 100139 / OT-3).